Reading from the N-terminus, the 486-residue chain is Palmitoyltransferase pfa4 (486 aa).

Residues 1 to 15 (MTNLQTGPTTRGLQR) lie on the Cytoplasmic side of the membrane. The helical transmembrane segment at 16-36 (FAIPAVCGLIIFLGYYSQYLF) threads the bilayer. Topologically, residues 37–51 (NTSADLAPGPLTCRE) are lumenal. Residues 52–72 (SLIFNILLVCLWLTYYQACTV) traverse the membrane as a helical segment. The Cytoplasmic segment spans residues 73–146 (DPGQYKFPPK…NCVSLQTFPH (74 aa)). A compositionally biased stretch (basic and acidic residues) spans 81 to 91 (PKEKEDGDNNN). The tract at residues 81–101 (PKEKEDGDNNNKRGGRGPQKA) is disordered. In terms of domain architecture, DHHC spans 102 to 152 (KWCKKCDAPKPPRAHHCRHCARCIPRMDHHCPWTGNCVSLQTFPHFLRFLV). C132 serves as the catalytic S-palmitoyl cysteine intermediate. The chain crosses the membrane as a helical span at residues 147–166 (FLRFLVYTNAALVYFARLLW). Residues 167–178 (TRLYYGLWDQRH) lie on the Lumenal side of the membrane. The chain crosses the membrane as a helical span at residues 179 to 201 (VPAYLGPSVGALLGCTMLSIAWF). The Cytoplasmic portion of the chain corresponds to 202–486 (ATQFALMVLL…RKVKSNGVHE (285 aa)). The tract at residues 314–420 (NDRVGMWPPP…QDGRAWMNSE (107 aa)) is disordered. Basic and acidic residues-rich tracts occupy residues 324–333 (DPEKLRRERA) and 346–376 (LNTEKPEVDYYRSSEDMKTAFKRRQQEDLRR). Positions 386–399 (EEDEIMAELEEDEG) are enriched in acidic residues.

It belongs to the DHHC palmitoyltransferase family. PFA4 subfamily.

It is found in the endoplasmic reticulum membrane. The enzyme catalyses L-cysteinyl-[protein] + hexadecanoyl-CoA = S-hexadecanoyl-L-cysteinyl-[protein] + CoA. In terms of biological role, mediates the reversible addition of palmitate to target proteins, thereby regulating their membrane association and biological function. The polypeptide is Palmitoyltransferase pfa4 (Neurospora crassa (strain ATCC 24698 / 74-OR23-1A / CBS 708.71 / DSM 1257 / FGSC 987)).